A 104-amino-acid chain; its full sequence is Large ribosomal subunit protein bL21 (104 aa).

This sequence belongs to the bacterial ribosomal protein bL21 family. Part of the 50S ribosomal subunit. Contacts protein L20.

This protein binds to 23S rRNA in the presence of protein L20. The protein is Large ribosomal subunit protein bL21 of Pseudomonas putida (strain W619).